The primary structure comprises 518 residues: Endoglucanase 18 (518 aa).

Residues 1–35 (MANCVRCCCWLLVLMLMALAITAAVVFVRYKNGEG) are Cytoplasmic-facing. A helical membrane pass occupies residues 36–56 (VFPFPGVPGAVDHKYADALAV). The Extracellular segment spans residues 57 to 518 (ALQFFQVQKS…STSSLARSLS (462 aa)). The N-linked (GlcNAc...) asparagine glycan is linked to N71. The Nucleophile role is filled by D101. 3 N-linked (GlcNAc...) asparagine glycosylation sites follow: N214, N251, and N272. The active site involves H436. N477 carries an N-linked (GlcNAc...) asparagine glycan. Catalysis depends on residues D482 and E491.

The protein belongs to the glycosyl hydrolase 9 (cellulase E) family.

The protein resides in the membrane. The enzyme catalyses Endohydrolysis of (1-&gt;4)-beta-D-glucosidic linkages in cellulose, lichenin and cereal beta-D-glucans.. The chain is Endoglucanase 18 from Oryza sativa subsp. japonica (Rice).